The sequence spans 416 residues: MEFEKIKVINPVVEMDGDEMTRVIWKFIKDKLIFPFLELDIKYFDLGLPNRDFTDDKVTIETAEATLKYNVAIKCATITPDEARVREFGLKKMWRSPNGTIRNILNGTVFREPIICRNIPRLVPGWTKPICIGRHAFGDQYRATDLIVNEPGKLKLVFEPSGSSQKTEFEVFNFTGGGVALAMYNTDESIRAFAESSMYTAYQKKWPLYLSTKNTILKIYDGRFKDIFQEVYEANWRSKYEAAGIWYEHRLIDDMVAYAMKSEGGYVWACKNYDGDVQSDFLAQGYGSLGMMTSVLVCPDGKTIEAEAAHGTVTRHYRVHQKGGETSTNSIASIFAWSRGLAHRAKLDSNAALLSYTEKLEAACMGTVESGKMTKDLALLIHGAKVRRDQYVNTEEFIDAVAWELKRRLLGNNSRL.

NADP(+) contacts are provided by residues 77–79 and arginine 84; that span reads TIT. Threonine 79 is a binding site for substrate. Residues 96 to 102, arginine 111, and arginine 134 each bind substrate; that span reads SPNGTIR. Aspartate 253 contacts Mn(2+). Lysine 261 provides a ligand contact to NADP(+). Aspartate 276 serves as a coordination point for Mn(2+). Residues 311 to 316 and asparagine 329 contribute to the NADP(+) site; that span reads GTVTRH. The Peroxisomal targeting signal signature appears at 414-416; it reads SRL.

The protein belongs to the isocitrate and isopropylmalate dehydrogenases family. It depends on Mg(2+) as a cofactor. The cofactor is Mn(2+).

The protein localises to the peroxisome. The catalysed reaction is D-threo-isocitrate + NADP(+) = 2-oxoglutarate + CO2 + NADPH. In terms of biological role, may be involved in response to oxidative stresses. In Arabidopsis thaliana (Mouse-ear cress), this protein is Peroxisomal isocitrate dehydrogenase [NADP] (ICDH).